The following is a 453-amino-acid chain: F-box protein At4g27050 (453 aa).

Residues 3–51 form the F-box domain; that stretch reads TDLISNLPDDVLGKILSLVPTKLAAATSVLSKRWRNLLPLVDSLDFDET.

As to quaternary structure, part of a SCF (ASK-cullin-F-box) protein ligase complex.

Its pathway is protein modification; protein ubiquitination. In terms of biological role, component of SCF(ASK-cullin-F-box) E3 ubiquitin ligase complexes, which may mediate the ubiquitination and subsequent proteasomal degradation of target proteins. This Arabidopsis thaliana (Mouse-ear cress) protein is F-box protein At4g27050.